The sequence spans 359 residues: Ferredoxin--NADP reductase (359 aa).

Residues D48, Q56, Y61, A101, F139, D304, and S345 each coordinate FAD. The disordered stretch occupies residues 340-359 (VHTHTSNDTNLQSRLHAAAE). Over residues 341-352 (HTHTSNDTNLQS) the composition is skewed to polar residues.

Belongs to the ferredoxin--NADP reductase type 2 family. In terms of assembly, homodimer. FAD serves as cofactor.

The enzyme catalyses 2 reduced [2Fe-2S]-[ferredoxin] + NADP(+) + H(+) = 2 oxidized [2Fe-2S]-[ferredoxin] + NADPH. The chain is Ferredoxin--NADP reductase from Ralstonia nicotianae (strain ATCC BAA-1114 / GMI1000) (Ralstonia solanacearum).